Here is a 458-residue protein sequence, read N- to C-terminus: Peptidyl-prolyl cis-trans isomerase FKBP4 (458 aa).

Methionine 1 is subject to N-acetylmethionine; in peptidyl-prolyl cis-trans isomerase FKBP4; alternate. The segment at 1–24 (MTAEEMKAAENGAQSAPLPLEGVD) is disordered. At threonine 2 the chain carries N-acetylthreonine; in peptidyl-prolyl cis-trans isomerase FKBP4, N-terminally processed; partial. A PPIase FKBP-type 1 domain is found at 50-138 (GDRVFVHYTG…VFEVELFEFK (89 aa)). Threonine 143 carries the phosphothreonine; by CK2 modification. One can recognise a PPIase FKBP-type 2 domain in the interval 167–253 (GAMVEVALEG…RYEVRLKSFE (87 aa)). A Phosphotyrosine modification is found at tyrosine 220. Residues 267–400 (LEQSNIVKER…TQLAVCQQRT (134 aa)) are interaction with tubulin. 3 TPR repeats span residues 270-303 (SNIV…LEYE), 319-352 (LASH…DSNN), and 353-386 (EKGL…YPSN). At lysine 282 the chain carries N6-acetyllysine. Residue arginine 373 is modified to Omega-N-methylarginine. The segment at 428–458 (EVAAGDHPTDAEMKGERNNVAENQSRVETEA) is disordered. Residues 434 to 458 (HPTDAEMKGERNNVAENQSRVETEA) show a composition bias toward basic and acidic residues. At threonine 436 the chain carries Phosphothreonine. A Glycyl lysine isopeptide (Lys-Gly) (interchain with G-Cter in SUMO1) cross-link involves residue lysine 441. Serine 452 is subject to Phosphoserine.

In terms of assembly, homodimer. Interacts with GLMN. Associates with HSP90AA1 and HSPA1A/HSPA1B in steroid hormone receptor complexes. Also interacts with peroxisomal phytanoyl-CoA alpha-hydroxylase (PHYH). Interacts with NR3C1 and dynein. Interacts with HSF1 in the HSP90 complex. Associates with tubulin. Interacts with MAPT/TAU. Interacts (via TPR domain) with S100A1, S100A2 and S100A6; the interaction is Ca(2+) dependent. Interaction with S100A1 and S100A2 (but not with S100A6) leads to inhibition of FKBP4-HSP90 interaction. Interacts with dynein; contributes to NR3C1 transport to the nucleus. In terms of processing, phosphorylation by CK2 results in loss of HSP90 binding activity.

It localises to the cytoplasm. Its subcellular location is the cytosol. The protein resides in the mitochondrion. The protein localises to the nucleus. It is found in the cytoskeleton. The catalysed reaction is [protein]-peptidylproline (omega=180) = [protein]-peptidylproline (omega=0). Its activity is regulated as follows. Inhibited by FK506. In terms of biological role, immunophilin protein with PPIase and co-chaperone activities. Component of steroid receptors heterocomplexes through interaction with heat-shock protein 90 (HSP90). May play a role in the intracellular trafficking of heterooligomeric forms of steroid hormone receptors between cytoplasm and nuclear compartments. The isomerase activity controls neuronal growth cones via regulation of TRPC1 channel opening. Also acts as a regulator of microtubule dynamics by inhibiting MAPT/TAU ability to promote microtubule assembly. May have a protective role against oxidative stress in mitochondria. This chain is Peptidyl-prolyl cis-trans isomerase FKBP4 (Fkbp4), found in Mus musculus (Mouse).